A 91-amino-acid polypeptide reads, in one-letter code: Small ribosomal subunit protein uS19 (91 aa).

It belongs to the universal ribosomal protein uS19 family.

Protein S19 forms a complex with S13 that binds strongly to the 16S ribosomal RNA. The polypeptide is Small ribosomal subunit protein uS19 (Marinomonas sp. (strain MWYL1)).